Reading from the N-terminus, the 365-residue chain is Aminomethyltransferase (365 aa).

The protein belongs to the GcvT family. As to quaternary structure, the glycine cleavage system is composed of four proteins: P, T, L and H.

The enzyme catalyses N(6)-[(R)-S(8)-aminomethyldihydrolipoyl]-L-lysyl-[protein] + (6S)-5,6,7,8-tetrahydrofolate = N(6)-[(R)-dihydrolipoyl]-L-lysyl-[protein] + (6R)-5,10-methylene-5,6,7,8-tetrahydrofolate + NH4(+). In terms of biological role, the glycine cleavage system catalyzes the degradation of glycine. The polypeptide is Aminomethyltransferase (Halalkalibacterium halodurans (strain ATCC BAA-125 / DSM 18197 / FERM 7344 / JCM 9153 / C-125) (Bacillus halodurans)).